We begin with the raw amino-acid sequence, 618 residues long: Protein polyglycylase TTLL10 (618 aa).

Positions 1-76 are disordered; sequence MGSSQEEGLP…GLLLGDGKPS (76 aa). Over residues 57–74 the composition is skewed to low complexity; that stretch reads ATGPPAALLEGLLLGDGK. The region spanning 82–479 is the TTL domain; it reads PGPFFYIGGN…TFQKSLRGQK (398 aa). Residues lysine 240, 246 to 247, 289 to 292, 302 to 304, and 345 to 346 each bind ATP; these read QG, QRYI, KFD, and TN. A protein is bound at residue glutamine 246. The Mg(2+) site is built by aspartate 425, glutamate 438, and asparagine 440. The disordered stretch occupies residues 503–618; the sequence is LGGSCSLRRR…PATLPAFRDL (116 aa). Residues 539–557 are compositionally biased toward pro residues; the sequence is PVPPPLAPQRPQLPGPSPD. Positions 585 to 594 are enriched in basic and acidic residues; that stretch reads AKEEREEPEN.

Requires Mg(2+) as cofactor.

It is found in the cytoplasm. It localises to the cytoskeleton. The protein resides in the cell projection. The protein localises to the cilium. Its subcellular location is the cilium axoneme. The enzyme catalyses (glycyl)(n)-glycyl-L-glutamyl-[protein] + glycine + ATP = (glycyl)(n+1)-glycyl-L-glutamyl-[protein] + ADP + phosphate + H(+). Polyglycylase which modifies both tubulin and non-tubulin proteins, generating polyglycine side chains of variable lengths on the gamma-carboxyl groups of specific glutamate residues of target proteins. Involved in the elongation step rather than the initiation step of the polyglycylation reaction. Polyglycylates alpha-tubulin and beta-tubulin. Polyglycylates non-tubulin proteins such as nucleosome assembly protein NAP1. This is Protein polyglycylase TTLL10 (TTLL10) from Macaca fascicularis (Crab-eating macaque).